A 298-amino-acid chain; its full sequence is Thymidylate synthase (298 aa).

Residues Arg25 and 159 to 160 (RR) each bind dUMP. The active-site Nucleophile is Cys179. Residues 200-203 (RSVD), Asn211, and 241-243 (HLY) each bind dUMP. Asp203 contacts (6R)-5,10-methylene-5,6,7,8-tetrahydrofolate. Ala297 serves as a coordination point for (6R)-5,10-methylene-5,6,7,8-tetrahydrofolate.

The protein belongs to the thymidylate synthase family. Bacterial-type ThyA subfamily. Homodimer.

Its subcellular location is the cytoplasm. It catalyses the reaction dUMP + (6R)-5,10-methylene-5,6,7,8-tetrahydrofolate = 7,8-dihydrofolate + dTMP. Its pathway is pyrimidine metabolism; dTTP biosynthesis. Catalyzes the reductive methylation of 2'-deoxyuridine-5'-monophosphate (dUMP) to 2'-deoxythymidine-5'-monophosphate (dTMP) while utilizing 5,10-methylenetetrahydrofolate (mTHF) as the methyl donor and reductant in the reaction, yielding dihydrofolate (DHF) as a by-product. This enzymatic reaction provides an intracellular de novo source of dTMP, an essential precursor for DNA biosynthesis. The chain is Thymidylate synthase from Cereibacter sphaeroides (strain ATCC 17029 / ATH 2.4.9) (Rhodobacter sphaeroides).